The sequence spans 384 residues: Urea transporter 1 (384 aa).

Helical transmembrane passes span 61–81 (ISQV…AGLL), 85–105 (PWWA…ALLL), 111–131 (AIAA…MAVF), 138–158 (FWWL…FSSA), and 168–188 (LPVF…ATGH). Asparagine 206 is a glycosylation site (N-linked (GlcNAc...) asparagine). Transmembrane regions (helical) follow at residues 250-270 (LMCL…LSLA), 279-299 (GLWG…FMAL), 305-325 (LLAL…THLM), and 327-347 (AVHL…FLLL).

The protein belongs to the urea transporter family. Homotrimer; each subunit contains a pore through which urea permeates. Identified in a complex with STOM. Expressed in brain, spleen, kidney, testis and lung, with highest levels in brain.

It is found in the cell membrane. Its subcellular location is the basolateral cell membrane. It carries out the reaction urea(in) = urea(out). Its function is as follows. Mediates the transport of urea driven by a concentration gradient across the cell membrane. Mediates the transport of urea across the cell membranes of erythrocytes and the renal inner medullary collecting duct which is critical to the urinary concentrating mechanism. Facilitates water transport in erythrocytes. The sequence is that of Urea transporter 1 (Slc14a1) from Rattus norvegicus (Rat).